The primary structure comprises 368 residues: DNA-directed RNA polymerase subunit alpha (368 aa).

The tract at residues 1 to 231 is alpha N-terminal domain (alpha-NTD); it reads MLWKGFQKPK…DHMNIFINFE (231 aa). The tract at residues 243-368 is alpha C-terminal domain (alpha-CTD); that stretch reads KPEIRNENLN…GFGGDNNPGF (126 aa).

This sequence belongs to the RNA polymerase alpha chain family. In terms of assembly, homodimer. The RNAP catalytic core consists of 2 alpha, 1 beta, 1 beta' and 1 omega subunit. When a sigma factor is associated with the core the holoenzyme is formed, which can initiate transcription.

The enzyme catalyses RNA(n) + a ribonucleoside 5'-triphosphate = RNA(n+1) + diphosphate. DNA-dependent RNA polymerase catalyzes the transcription of DNA into RNA using the four ribonucleoside triphosphates as substrates. In Koribacter versatilis (strain Ellin345), this protein is DNA-directed RNA polymerase subunit alpha.